A 655-amino-acid chain; its full sequence is p-hydroxybenzoic acid efflux pump subunit AaeB (655 aa).

Residues 1-12 lie on the Periplasmic side of the membrane; sequence MGIFSIANQHIR. The helical transmembrane segment at 13-33 threads the bilayer; that stretch reads FAVKLACAIVLALFIGFHFQL. Over 34–37 the chain is Cytoplasmic; sequence ETPR. The helical transmembrane segment at 38-58 threads the bilayer; sequence WAVLTAAIVAAGPAFAAGGEP. The Periplasmic portion of the chain corresponds to 59 to 68; that stretch reads YSGAIRYRGM. The helical transmembrane segment at 69–89 threads the bilayer; sequence LRIIGTFIGCIAALIIIISMI. Residues 90–92 are Cytoplasmic-facing; it reads RAP. The helical transmembrane segment at 93–113 threads the bilayer; that stretch reads LLMILVCCVWAGFCTWISSLV. Over 114 to 120 the chain is Periplasmic; that stretch reads RIENSYA. Residues 121-141 traverse the membrane as a helical segment; it reads WGLSGYTALIIVITIQTEPLL. At 142–151 the chain is on the cytoplasmic side; sequence TPQFALERCS. A helical transmembrane segment spans residues 152-172; sequence EIVIGIGCAILADLLFSPRSI. The Periplasmic segment spans residues 173–369; that stretch reads KQEVDRELDC…RTTLSCILGT (197 aa). A helical membrane pass occupies residues 370-390; sequence LFWLWTGWTSGNGAMVMIAVV. The Cytoplasmic portion of the chain corresponds to 391 to 406; it reads TSLAMRLPNPRMVCID. A helical membrane pass occupies residues 407-427; it reads FIYGTLAALPLGLLYFLVIIP. Residues 428–430 are Periplasmic-facing; it reads NTQ. Residues 431–451 form a helical membrane-spanning segment; that stretch reads QSMLLLCLSLAVLGFFIGIEV. At 452 to 459 the chain is on the cytoplasmic side; the sequence is QKRRLGSM. Residues 460–480 traverse the membrane as a helical segment; that stretch reads GALASTINIIVLDNPMTFHFI. Gln-481 is a topological domain (periplasmic). The chain crosses the membrane as a helical span at residues 482 to 502; the sequence is FLDSALGQIVGCMLAFIVILL. The Cytoplasmic portion of the chain corresponds to 503–655; the sequence is VRDKSKDRTG…HKYQNALTDS (153 aa).

Belongs to the aromatic acid exporter ArAE (TC 2.A.85) family.

It is found in the cell inner membrane. Functionally, forms an efflux pump with AaeA. Could function as a metabolic relief valve, allowing to eliminate certain compounds when they accumulate to high levels in the cell. This is p-hydroxybenzoic acid efflux pump subunit AaeB from Salmonella typhi.